The sequence spans 512 residues: ATP synthase subunit alpha (512 aa).

169–176 (GDRQTGKT) is a binding site for ATP.

This sequence belongs to the ATPase alpha/beta chains family. F-type ATPases have 2 components, CF(1) - the catalytic core - and CF(0) - the membrane proton channel. CF(1) has five subunits: alpha(3), beta(3), gamma(1), delta(1), epsilon(1). CF(0) has three main subunits: a(1), b(2) and c(9-12). The alpha and beta chains form an alternating ring which encloses part of the gamma chain. CF(1) is attached to CF(0) by a central stalk formed by the gamma and epsilon chains, while a peripheral stalk is formed by the delta and b chains.

It is found in the cell inner membrane. It carries out the reaction ATP + H2O + 4 H(+)(in) = ADP + phosphate + 5 H(+)(out). In terms of biological role, produces ATP from ADP in the presence of a proton gradient across the membrane. The alpha chain is a regulatory subunit. This chain is ATP synthase subunit alpha, found in Azoarcus sp. (strain BH72).